Reading from the N-terminus, the 465-residue chain is Indoleacetamide hydrolase (465 aa).

The segment at 1–40 (MVRGRHRSRDPQRRDLRGRDRRSASRTDARRQSAAERGCR) is disordered. The segment covering 9 to 39 (RDPQRRDLRGRDRRSASRTDARRQSAAERGC) has biased composition (basic and acidic residues). Ser149 serves as the catalytic Charge relay system. The Acyl-ester intermediate role is filled by Ser173.

The protein belongs to the amidase family.

Its pathway is plant hormone metabolism; auxin biosynthesis. Hydrolyzes indole-3-acetamide (IAM) into indole-3-acetic acid (IAA). This Bradyrhizobium japonicum protein is Indoleacetamide hydrolase (bam).